An 86-amino-acid polypeptide reads, in one-letter code: Mitochondrial import inner membrane translocase subunit Tim10 (86 aa).

The Twin CX3C motif signature appears at 29-54; it reads CQAKCIATAFKESELTKGEAVCLDRC. 2 cysteine pairs are disulfide-bonded: Cys29–Cys54 and Cys33–Cys50.

It belongs to the small Tim family. As to quaternary structure, heterohexamer; composed of 3 copies of tim-9/tin-9.1 and 3 copies of tim-10/tin-10, named soluble 70 kDa complex. The complex associates with the tim-22 component of the TIM22 complex. Interacts with multi-pass transmembrane proteins in transit.

It is found in the mitochondrion inner membrane. Mitochondrial intermembrane chaperone that participates in the import and insertion of multi-pass transmembrane proteins into the mitochondrial inner membrane. May also be required for the transfer of beta-barrel precursors from the TOM complex to the sorting and assembly machinery (SAM complex) of the outer membrane. Acts as a chaperone-like protein that protects the hydrophobic precursors from aggregation and guide them through the mitochondrial intermembrane space. The sequence is that of Mitochondrial import inner membrane translocase subunit Tim10 (tin-10) from Caenorhabditis briggsae.